Here is a 246-residue protein sequence, read N- to C-terminus: NAD-dependent protein deacylase (246 aa).

The 246-residue stretch at Met-1–Asp-246 folds into the Deacetylase sirtuin-type domain. Gly-21–Trp-41 provides a ligand contact to NAD(+). Residues Tyr-66 and Arg-69 each contribute to the substrate site. Gln-101 to Asp-104 is a binding site for NAD(+). His-123 (proton acceptor) is an active-site residue. Residues Gly-191–Ser-193, Asn-217–Glu-219, and Ala-235 contribute to the NAD(+) site.

It belongs to the sirtuin family. Class III subfamily.

The protein resides in the cytoplasm. It catalyses the reaction N(6)-acetyl-L-lysyl-[protein] + NAD(+) + H2O = 2''-O-acetyl-ADP-D-ribose + nicotinamide + L-lysyl-[protein]. The catalysed reaction is N(6)-succinyl-L-lysyl-[protein] + NAD(+) + H2O = 2''-O-succinyl-ADP-D-ribose + nicotinamide + L-lysyl-[protein]. In terms of biological role, NAD-dependent lysine deacetylase and desuccinylase that specifically removes acetyl and succinyl groups on target proteins. Modulates the activities of several proteins which are inactive in their acylated form. The protein is NAD-dependent protein deacylase of Deinococcus radiodurans (strain ATCC 13939 / DSM 20539 / JCM 16871 / CCUG 27074 / LMG 4051 / NBRC 15346 / NCIMB 9279 / VKM B-1422 / R1).